Here is a 656-residue protein sequence, read N- to C-terminus: Pumilio homology domain family member 6 (656 aa).

The tract at residues 1 to 107 is disordered; it reads MAPLTKKTNG…GGENGNHTEQ (107 aa). Positions 13-23 are enriched in basic and acidic residues; the sequence is SAKEVSHSEKK. 3 positions are modified to phosphoserine; by CK2: Ser-31, Ser-34, and Ser-35. Ser-34 and Ser-35 each carry phosphoserine. Over residues 52–89 the composition is skewed to acidic residues; the sequence is SDDDDLDDLSTSDSEAEEEADELDISDDSEEHENENEE. Basic and acidic residues predominate over residues 90 to 107; it reads KEGKDKSEGGENGNHTEQ. Residues 133–483 enclose the PUM-HD domain; sequence RLRVKTPPLP…ELLSKFAPMF (351 aa). Pumilio repeat units follow at residues 155–191, 192–227, 228–264, 340–376, 377–413, and 415–450; these read ELSKDCISDLVLKHDASRIVQTLVKYSSKDRREQIVD, ALKGKFYVLATSAYGKYLLVKLLHYGSRSSRQTIIN, ELHGSLRKLMRHREGAYVVEDLFVLYATHEQRQQMIK, ELLHEQFAELVHTPEGSDVACTLVARANAKERKLILK, ALKNHAEKLIKNEYGNIVFITILNCVDDTVLVFKTFS, and TVKEHLQEFIIDKFGRRPWLYILLGLDGKYFSPIVK.

Belongs to the PUF6 family. In terms of assembly, component of the ASH1 mRNP composed of at least PUF6, SHE2, SHE3, SHE1 and the ASH1 mRNA. Interacts with SHE2 and FUN12. In terms of processing, phosphorylation by CK2 relieves translational repression activity.

It localises to the bud tip. Its subcellular location is the nucleus. The protein resides in the nucleolus. In terms of biological role, RNA-binding protein involved in post-transcriptional regulation. Component of the ASH1 mRNP which transports the ASH1 mRNA to the distal tip of the bud, where the ASH1 protein is translated and targeted to the daughter cell nucleus. Binds to the ASH1 3'-UTR containing the PUF consensus UUGU segment and represses its translation. This silencing of ASH1 mRNA is critical for asymmetric seggregation of ASH1 to the daughter cell nucleus. The protein is Pumilio homology domain family member 6 (PUF6) of Saccharomyces cerevisiae (strain ATCC 204508 / S288c) (Baker's yeast).